Here is a 263-residue protein sequence, read N- to C-terminus: uncharacterized protein (263 aa).

The stretch at L72–K168 forms a coiled coil. Positions E76–D158 are disordered. The segment covering K83–L95 has biased composition (basic residues). Positions K96–D107 are enriched in basic and acidic residues. The segment covering K108 to K121 has biased composition (basic residues). Composition is skewed to basic and acidic residues over residues D122–D131 and K139–D158.

This is an uncharacterized protein from Dictyostelium discoideum (Social amoeba).